The primary structure comprises 95 residues: Small ribosomal subunit protein uS19 (95 aa).

The protein belongs to the universal ribosomal protein uS19 family.

Protein S19 forms a complex with S13 that binds strongly to the 16S ribosomal RNA. The polypeptide is Small ribosomal subunit protein uS19 (Thermodesulfovibrio yellowstonii (strain ATCC 51303 / DSM 11347 / YP87)).